We begin with the raw amino-acid sequence, 308 residues long: Insoluble matrix shell protein 4 (308 aa).

3 disordered regions span residues 1–21 (HGNG…GNGY), 47–104 (NTNS…PNAV), and 134–250 (YDSN…NTNS). A compositionally biased stretch (low complexity) spans 47–99 (NTNSLNGNNNGNSNNNGNGNNNGNSNNNGNGNNNGNTNNGNSYDSNTNDDSNS).

As to expression, component of the acid-insoluble organic matrix of the calcified shell.

The protein localises to the secreted. This Ruditapes philippinarum (Japanese carpet shell) protein is Insoluble matrix shell protein 4.